A 112-amino-acid chain; its full sequence is Protein ORF1 (112 aa).

The segment covering 1-10 (MEGTDWSGWG) has biased composition (low complexity). The interval 1 to 20 (MEGTDWSGWGDDSDFPWPKG) is disordered. The helical transmembrane segment at 51 to 71 (IAFVILIVSLFVLLLGVLLAC) threads the bilayer.

It localises to the host membrane. This is Protein ORF1 from Snake adenovirus serotype 1 (SnAdV-1).